The sequence spans 482 residues: ATP synthase subunit beta (482 aa).

162–169 (GGAGVGKT) serves as a coordination point for ATP.

This sequence belongs to the ATPase alpha/beta chains family. In terms of assembly, F-type ATPases have 2 components, CF(1) - the catalytic core - and CF(0) - the membrane proton channel. CF(1) has five subunits: alpha(3), beta(3), gamma(1), delta(1), epsilon(1). CF(0) has four main subunits: a(1), b(1), b'(1) and c(9-12).

Its subcellular location is the cellular thylakoid membrane. The catalysed reaction is ATP + H2O + 4 H(+)(in) = ADP + phosphate + 5 H(+)(out). Functionally, produces ATP from ADP in the presence of a proton gradient across the membrane. The catalytic sites are hosted primarily by the beta subunits. The polypeptide is ATP synthase subunit beta (Synechococcus sp. (strain PCC 6716)).